Reading from the N-terminus, the 237-residue chain is Ribosomal RNA small subunit methyltransferase G (237 aa).

S-adenosyl-L-methionine-binding positions include G78, F83, 129-130, and R146; that span reads AE.

Belongs to the methyltransferase superfamily. RNA methyltransferase RsmG family.

It localises to the cytoplasm. In terms of biological role, specifically methylates the N7 position of a guanine in 16S rRNA. In Mesoplasma florum (strain ATCC 33453 / NBRC 100688 / NCTC 11704 / L1) (Acholeplasma florum), this protein is Ribosomal RNA small subunit methyltransferase G.